Reading from the N-terminus, the 1286-residue chain is 5-oxoprolinase (1286 aa).

A phosphoserine mark is found at S930 and S1077.

Belongs to the oxoprolinase family. In terms of assembly, homodimer.

The protein resides in the cytoplasm. It carries out the reaction 5-oxo-L-proline + ATP + 2 H2O = L-glutamate + ADP + phosphate + H(+). Its function is as follows. Catalyzes the cleavage of 5-oxo-L-proline to form L-glutamate coupled to the hydrolysis of ATP to ADP and inorganic phosphate. This is 5-oxoprolinase (OXP1) from Saccharomyces cerevisiae (strain ATCC 204508 / S288c) (Baker's yeast).